The primary structure comprises 1441 residues: Protein clueless (1441 aa).

2 disordered regions span residues 1–79 (MALD…EAAT) and 106–131 (VAANDESESAEQQAAENAASSGELES). Residues 8–22 (KNSSSAATGDANTVK) show a composition bias toward polar residues. Basic residues predominate over residues 54 to 63 (AKKKGKKNRN). Low complexity-rich tracts occupy residues 64-79 (KSPPIATDAETTEAAT) and 106-126 (VAANDESESAEQQAAENAASS). Phosphoserine is present on S273. The 243-residue stretch at 427-669 (RAEDAFSSKL…RTFPPDVNFL (243 aa)) folds into the Clu domain. Positions 726-753 (KKQDEAKEGTKEPASETEKESPPKAITE) are enriched in basic and acidic residues. 2 disordered regions span residues 726 to 769 (KKQD…GETK) and 961 to 1009 (EIHK…SGGT). Basic residues predominate over residues 964–977 (KKRTNTKYNKHKSS). Low complexity predominate over residues 978-1009 (KSSGSGSKQSGQTSNQNGTSTSPSSSTASGGT). TPR repeat units lie at residues 1109-1142 (AYNFYTTGQSKIQQGLFKEGYELISEALNLLNNV), 1235-1268 (ALIDSNISLILHALGEYELSLRFIEHALKLNLKY), and 1270-1303 (GAKAMHVAVSYHLMARTQSCMGDFRSALNNEKET).

It belongs to the CLU family.

Its subcellular location is the cytoplasm. MRNA-binding protein involved in proper cytoplasmic distribution of mitochondria. This Drosophila willistoni (Fruit fly) protein is Protein clueless.